The sequence spans 309 residues: Protein FdhE homolog (309 aa).

Belongs to the FdhE family.

It is found in the cytoplasm. Its function is as follows. Necessary for formate dehydrogenase activity. The chain is Protein FdhE homolog from Citrobacter koseri (strain ATCC BAA-895 / CDC 4225-83 / SGSC4696).